The following is a 221-amino-acid chain: Endonuclease V (221 aa).

D38 and D104 together coordinate Mg(2+).

This sequence belongs to the endonuclease V family. It depends on Mg(2+) as a cofactor.

The protein resides in the cytoplasm. The catalysed reaction is Endonucleolytic cleavage at apurinic or apyrimidinic sites to products with a 5'-phosphate.. In terms of biological role, DNA repair enzyme involved in the repair of deaminated bases. Selectively cleaves double-stranded DNA at the second phosphodiester bond 3' to a deoxyinosine leaving behind the intact lesion on the nicked DNA. Recognizes only deoxyinosine. The protein is Endonuclease V of Archaeoglobus fulgidus (strain ATCC 49558 / DSM 4304 / JCM 9628 / NBRC 100126 / VC-16).